We begin with the raw amino-acid sequence, 268 residues long: Tryptophan synthase alpha chain (268 aa).

Active-site proton acceptor residues include glutamate 49 and aspartate 60.

It belongs to the TrpA family. Tetramer of two alpha and two beta chains.

It catalyses the reaction (1S,2R)-1-C-(indol-3-yl)glycerol 3-phosphate + L-serine = D-glyceraldehyde 3-phosphate + L-tryptophan + H2O. The protein operates within amino-acid biosynthesis; L-tryptophan biosynthesis; L-tryptophan from chorismate: step 5/5. The alpha subunit is responsible for the aldol cleavage of indoleglycerol phosphate to indole and glyceraldehyde 3-phosphate. The chain is Tryptophan synthase alpha chain from Escherichia coli (strain ATCC 8739 / DSM 1576 / NBRC 3972 / NCIMB 8545 / WDCM 00012 / Crooks).